The primary structure comprises 59 residues: Prokaryotic ubiquitin-like protein UBact (59 aa).

A disordered region spans residues 1 to 59 (MEMTDPLRREEKKESSPDPKEESGPSRPDVSRPGRDSLLKRMKKVDPKQSEKYKQRTGQ). The residue at position 59 (glutamine 59) is a Deamidated glutamine. Residue glutamine 59 forms an Isoglutamyl lysine isopeptide (Gln-Lys) (interchain with K-? in acceptor proteins) linkage.

The protein belongs to the ubiquitin-like protein UBact family. In terms of processing, may be modified by deamidation of its C-terminal glutamine to glutamate by the adjacently encoded deamidase. This could be a prerequisite to the subsequent conjugation, as shown in the other prokaryotic ubiquitin-like protein Pup.

May function as a protein modifier covalently attached to lysine residues of substrate proteins. This may serve to target the modified proteins for degradation by proteasomes. This Nitrospina gracilis (strain 3/211) protein is Prokaryotic ubiquitin-like protein UBact.